A 434-amino-acid polypeptide reads, in one-letter code: MGPSVAPHAVHTIANPGVSAAGLVAADHAVAAAIADEETRQRDSIELIASENFVSRAVLDAQGSVLTNKYAEGYPHRRYYGGCANVDAIEDLVIARVNQLFGSAYANVQPHSGSQANQAVFLALLAPGDTILGLDLKAGGHLTHGAPVNMSGRWFKAVSYGVDPETHRIDMDQVAVQARQHRPRLLIAGGSAYPRIIDFGRFRQIADEVGAILMVDMAHFAGLVAGGVYPSPVPFADVVTSTTHKTLRGPRGGFVLTNDANIAKKINSATFPGLQGGPLMHVIAAKAVAFGEALQPEFGAYAQAVVENCRVLAQALADGGLTITSGGTDCHLAVVDLRPFGVTGNIAEQALESVGITLNKNAIPNDPEKPMVTSGIRVGTAAGTSRGFGADQYREIAGLVLETLHAVRAGTLDAAGQEINKSVRRLAASFPLPY.

Residues Leu-136 and 140–142 each bind (6S)-5,6,7,8-tetrahydrofolate; that span reads GHL. The residue at position 245 (Lys-245) is an N6-(pyridoxal phosphate)lysine.

It belongs to the SHMT family. Homodimer. Requires pyridoxal 5'-phosphate as cofactor.

The protein resides in the cytoplasm. The enzyme catalyses (6R)-5,10-methylene-5,6,7,8-tetrahydrofolate + glycine + H2O = (6S)-5,6,7,8-tetrahydrofolate + L-serine. It functions in the pathway one-carbon metabolism; tetrahydrofolate interconversion. The protein operates within amino-acid biosynthesis; glycine biosynthesis; glycine from L-serine: step 1/1. In terms of biological role, catalyzes the reversible interconversion of serine and glycine with tetrahydrofolate (THF) serving as the one-carbon carrier. This reaction serves as the major source of one-carbon groups required for the biosynthesis of purines, thymidylate, methionine, and other important biomolecules. Also exhibits THF-independent aldolase activity toward beta-hydroxyamino acids, producing glycine and aldehydes, via a retro-aldol mechanism. This Rhodopseudomonas palustris (strain ATCC BAA-98 / CGA009) protein is Serine hydroxymethyltransferase 2.